The primary structure comprises 924 residues: MQIPKYENKPFKPPRRVGSNKYTQLKPTATAVTTAPISKAKVTVNLKRSISAGPTLNLAKKPNNLSSNENTRYFTIMYRKPTTKKHKTWSGDGYATLKASSDKLCFYNEAGKFLGSSMLPSDSDSLFETLFKAGSNEVQLDYELKENAEIRSAKEALSQNMGNPNPPTTSTTETVPSTKNDGGKYQMPLSQLFSLNTVKRFKSVTKQTNEHMTTVPKTSQNSKAKKYYPVFDVNKIDNPIVMNKNAAAEVDVIVDPLLGKFLRPHQREGVKFMYDCLMGLARPTIENPDIDCTTKSLVLENDSDISGCLLADDMGLGKTLMSITLIWTLIRQTPFASKVSCSQSGIPLTGLCKKILVVCPVTLIGNWKREFGKWLNLSRIGVLTLSSRNSPDMDKMAVRNFLKVQRTYQVLIIGYEKLLSVSEELEKNKHLIDMLVCDEGHRLKNGASKILNTLKSLDIRRKLLLTGTPIQNDLNEFFTIIDFINPGILGSFASFKRRFIIPITRARDTANRYNEELLEKGEERSKEMIEITKRFILRRTNAILEKYLPPKTDIILFCKPYSQQILAFKDILQGARLDFGQLTFSSSLGLITLLKKVCNSPGLVGSDPYYKSHIKDTQSQDSYSRSLNSGKLRVLMTLLEGIRKGTKEKVVVVSNYTQTLDIIENLMNMAGMSHCRLDGSIPAKQRDSIVTSFNRNPAIFGFLLSAKSGGVGLNLVGASRLILFDNDWNPSVDLQAMSRIHRDGQKKPCFIYRLVTTGCIDEKILQRQLMKNSLSQKFLGDSEMRNKESSNDDLFNKEDLKDLFSVHTDTKSNTHDLICSCDGLGEEIEYPETNQQQNTVELRKRSTTTWTSALDLQKKMNEAATNDDAKKSQYIRQCLVHYKHIDPARQDELFDEVITDSFTDLKDSITFAFVKPGEICLREQ.

Positions 1 to 10 (MQIPKYENKP) are enriched in basic and acidic residues. Disordered stretches follow at residues 1-21 (MQIP…GSNK) and 155-183 (EALS…NDGG). Low complexity predominate over residues 168–178 (TTSTTETVPST). In terms of domain architecture, Helicase ATP-binding spans 299–487 (LENDSDISGC…FTIIDFINPG (189 aa)). Residue 346-353 (IPLTGLCK) coordinates ATP. The short motif at 472–475 (NDLN) is the DEGH box element. A Glycyl lysine isopeptide (Lys-Gly) (interchain with G-Cter in ubiquitin) cross-link involves residue Lys-615. The Helicase C-terminal domain occupies 631–790 (KLRVLMTLLE…DSEMRNKESS (160 aa)).

Belongs to the SNF2/RAD54 helicase family. As to quaternary structure, interacts with RAD51 and DMC1.

Its subcellular location is the nucleus. It carries out the reaction ATP + H2O = ADP + phosphate + H(+). Involved in the recombinational repair of double-strand breaks (DSB) in DNA during mitosis and meiosis. Has DNA dependent ATPase activity. Promotes D-loop (displacement loop) formation with RAD51 recombinase. Modifies the topology of double-stranded DNA during the D-loop reaction to facilitate the invasion of the homologous duplex molecule by the initiating single-stranded DNA substrate. Required for adaptation from G2/M checkpoint arrest induced by a double strand break, by participating in monitoring the extent of single-stranded DNA produced by resection of DNA ends. This role is distinct from its roles in recombination. Promotes colocalization of RAD51 and DMC1 during meiotic recombination. Involved in crossover interference. This Saccharomyces cerevisiae (strain YJM789) (Baker's yeast) protein is DNA repair and recombination protein RDH54 (RDH54).